The sequence spans 391 residues: NADH-quinone oxidoreductase subunit D (391 aa).

The protein belongs to the complex I 49 kDa subunit family. As to quaternary structure, NDH-1 is composed of 14 different subunits. Subunits NuoB, C, D, E, F, and G constitute the peripheral sector of the complex.

The protein resides in the cell inner membrane. It catalyses the reaction a quinone + NADH + 5 H(+)(in) = a quinol + NAD(+) + 4 H(+)(out). Its function is as follows. NDH-1 shuttles electrons from NADH, via FMN and iron-sulfur (Fe-S) centers, to quinones in the respiratory chain. The immediate electron acceptor for the enzyme in this species is believed to be ubiquinone. Couples the redox reaction to proton translocation (for every two electrons transferred, four hydrogen ions are translocated across the cytoplasmic membrane), and thus conserves the redox energy in a proton gradient. The polypeptide is NADH-quinone oxidoreductase subunit D (Rickettsia felis (strain ATCC VR-1525 / URRWXCal2) (Rickettsia azadi)).